Reading from the N-terminus, the 279-residue chain is RxLR effector protein Avh331 (279 aa).

A signal peptide spans 1–20 (MMQWSAILIRTCFSGSGGEA). The short motif at 86–106 (RSLRSQATNVDDDANVSIENR) is the RxLR-dEER element. An N-linked (GlcNAc...) asparagine glycan is attached at Asn-100. Residues 129 to 147 (ANKLWLMADVDPKSAFKLL) are W1 motif. Positions 153-174 (GVRFIDNPKMLQWLKFTKAYLD) are Y1 motif. Residues 178–208 (SGFGETSAHALLYEKIGGPDLSLLLLSLKDA) form a l motif region. A W2 motif region spans residues 222–240 (QFGMWHDARIEPEQLAQTV). A Y2 motif region spans residues 250–271 (PKNDPKLQVIDDYAKYHRKHRK).

It belongs to the RxLR effector family.

It localises to the secreted. Its subcellular location is the host cell. Its function is as follows. Effector that suppresses the host mitogen-activated protein kinase (MAPK)-based plant defense activated by the Phytophthora elicitor to promote colonization of the Phytophthora pathogen. Neither directly inhibits MAPK kinase activity nor interacts with MAPK proteins but acts downstream by suppressing transcriptional activation of resistance marker genes such as FRK1, WRKY22 and WRKY29. Confers avirulence in the presence of resistance protein Rps1k in host. This Phytophthora sojae (strain P6497) (Soybean stem and root rot agent) protein is RxLR effector protein Avh331.